An 842-amino-acid polypeptide reads, in one-letter code: Protein translocase subunit SecA (842 aa).

ATP-binding positions include Gln85, 103 to 107 (GEGKT), and Asp493. Residues Cys825, Cys827, Cys836, and His837 each contribute to the Zn(2+) site.

This sequence belongs to the SecA family. Monomer and homodimer. Part of the essential Sec protein translocation apparatus which comprises SecA, SecYEG and auxiliary proteins SecDF. Other proteins may also be involved. Requires Zn(2+) as cofactor.

It is found in the cell membrane. Its subcellular location is the cytoplasm. It catalyses the reaction ATP + H2O + cellular proteinSide 1 = ADP + phosphate + cellular proteinSide 2.. Functionally, part of the Sec protein translocase complex. Interacts with the SecYEG preprotein conducting channel. Has a central role in coupling the hydrolysis of ATP to the transfer of proteins into and across the cell membrane, serving as an ATP-driven molecular motor driving the stepwise translocation of polypeptide chains across the membrane. The polypeptide is Protein translocase subunit SecA (Streptococcus equi subsp. zooepidemicus (strain MGCS10565)).